The chain runs to 319 residues: Ribosomal RNA small subunit methyltransferase H (319 aa).

S-adenosyl-L-methionine is bound by residues 37 to 39 (GGY), Asp57, Phe96, Asp105, and Gln112. Basic and acidic residues predominate over residues 292–302 (RPDEREKERNP). The interval 292–319 (RPDEREKERNPRSRSARLRAVEKQGVPA) is disordered.

Belongs to the methyltransferase superfamily. RsmH family.

It localises to the cytoplasm. It carries out the reaction cytidine(1402) in 16S rRNA + S-adenosyl-L-methionine = N(4)-methylcytidine(1402) in 16S rRNA + S-adenosyl-L-homocysteine + H(+). In terms of biological role, specifically methylates the N4 position of cytidine in position 1402 (C1402) of 16S rRNA. This is Ribosomal RNA small subunit methyltransferase H from Syntrophobacter fumaroxidans (strain DSM 10017 / MPOB).